We begin with the raw amino-acid sequence, 286 residues long: uncharacterized protein (286 aa).

A disordered region spans residues 1–47 (MAIPFLHKGGSDDSTHHHTHDYDHHNHDHHGHDHHSHDSSSNSSSEA). Over residues 9–26 (GGSDDSTHHHTHDYDHHN) the composition is skewed to basic and acidic residues. 93–100 (GPVGSGKT) contributes to the GTP binding site.

It belongs to the SIMIBI class G3E GTPase family. UreG subfamily.

The protein resides in the cytoplasm. Its subcellular location is the nucleus. In terms of biological role, probably facilitates nickel incorporation. This is an uncharacterized protein from Schizosaccharomyces pombe (strain 972 / ATCC 24843) (Fission yeast).